Consider the following 489-residue polypeptide: Blue-light-activated histidine kinase (489 aa).

The 75-residue stretch at 19–93 folds into the PAS domain; that stretch reads ATDPFRAAVE…AIKSAIAAEK (75 aa). Residue Cys-69 is modified to S-4a-FMN cysteine. PAC domains follow at residues 93–147 and 232–281; these read KPID…ELEK and YSIE…NKAL. The tract at residues 259–341 is HWE histidine kinase domain; that stretch reads NPLVLGIVQD…LLKENWAGAT (83 aa). His-288 bears the Phosphohistidine; by autocatalysis mark.

Post-translationally, FMN binds covalently to cysteine after exposure to blue light and this bond is spontaneously broken in the dark.

The catalysed reaction is ATP + protein L-histidine = ADP + protein N-phospho-L-histidine.. Photosensitive kinase that is involved in increased bacterial virulence upon exposure to light. Once ejected from an infected animal host, sunlight acts as an environmental signal that increases the virulence of the bacterium, preparing it for infection of the next host. This photoreceptor protein is directly related to the bacterium's survival and replication within host macrophages. In Brucella ovis (strain ATCC 25840 / 63/290 / NCTC 10512), this protein is Blue-light-activated histidine kinase.